The following is a 244-amino-acid chain: DNA polymerase sliding clamp (244 aa).

Belongs to the PCNA family. Homotrimer. The subunits circularize to form a toroid; DNA passes through its center. Replication factor C (RFC) is required to load the toroid on the DNA.

Sliding clamp subunit that acts as a moving platform for DNA processing. Responsible for tethering the catalytic subunit of DNA polymerase and other proteins to DNA during high-speed replication. This is DNA polymerase sliding clamp from Methanothrix thermoacetophila (strain DSM 6194 / JCM 14653 / NBRC 101360 / PT) (Methanosaeta thermophila).